The chain runs to 542 residues: Chloride channel CLIC-like protein 1 (542 aa).

The signal sequence occupies residues 1 to 18 (MLYSLLLCECLWLITAYA). Topologically, residues 19-184 (HDDEWIDPTD…EEFFGVDPYN (166 aa)) are lumenal. The helical transmembrane segment at 185 to 205 (VFMVLLCLLCIVALVATELWT) threads the bilayer. The Cytoplasmic portion of the chain corresponds to 206 to 216 (YVRWYTQLKRV). A helical membrane pass occupies residues 217-237 (FFISFLISLGWNWMYLYKLAF). At 238 to 329 (AQHQAEVAKM…GEFIKALMKE (92 aa)) the chain is on the lumenal side. The helical transmembrane segment at 330-350 (IPVLLHIPVLIIMALAVLSFC) threads the bilayer. The Cytoplasmic segment spans residues 351 to 542 (YGAGKSVNML…PASTAVEVCG (192 aa)). The interval 369–394 (EAPQALQAGERRRQQKIDYRPHGGAG) is disordered. Over residues 377–389 (GERRRQQKIDYRP) the composition is skewed to basic and acidic residues. Phosphoserine is present on residues S438 and S464. Residues 452–542 (AREHPKVVPG…PASTAVEVCG (91 aa)) form a disordered region. The segment covering 480–491 (ESTPTESSTESS) has biased composition (low complexity). At T482 the chain carries Phosphothreonine. Phosphoserine is present on S532.

The protein belongs to the chloride channel MCLC family. In terms of assembly, homomultimers. Interacts with mitochondrial protein PIGBOS1 (via C-terminus); the interaction occurs at the mitochondria-associated endoplasmic reticulum (ER) membrane, a zone of contact between the ER and mitochondrial membranes, but does not appear to play a role in ER-mitochondria tethering and is not affected by ER stress. Interacts with CALR.

The protein resides in the endoplasmic reticulum membrane. It carries out the reaction chloride(in) = chloride(out). The enzyme catalyses bromide(in) = bromide(out). It catalyses the reaction nitrate(in) = nitrate(out). The catalysed reaction is fluoride(in) = fluoride(out). Anion-selective channel with Ca(2+)-dependent and voltage-independent gating. Permeable to small monovalent anions with selectivity for bromide &gt; chloride &gt; nitrate &gt; fluoride. Operates in the endoplasmic reticulum (ER) membrane where it mediates chloride efflux to compensate for the loss of positive charges from the ER lumen upon Ca(2+) release. Contributes to the maintenance of ER Ca(2+) pools and activation of unfolded protein response to prevent accumulation of misfolded proteins in the ER lumen. Particularly involved in ER homeostasis mechanisms underlying motor neurons and retinal photoreceptors survival. This is Chloride channel CLIC-like protein 1 (CLCC1) from Bos taurus (Bovine).